Here is a 157-residue protein sequence, read N- to C-terminus: Small ribosomal subunit protein uS7 (157 aa).

It belongs to the universal ribosomal protein uS7 family. As to quaternary structure, part of the 30S ribosomal subunit. Contacts proteins S9 and S11.

Functionally, one of the primary rRNA binding proteins, it binds directly to 16S rRNA where it nucleates assembly of the head domain of the 30S subunit. Is located at the subunit interface close to the decoding center, probably blocks exit of the E-site tRNA. The polypeptide is Small ribosomal subunit protein uS7 (Herpetosiphon aurantiacus (strain ATCC 23779 / DSM 785 / 114-95)).